A 45-amino-acid chain; its full sequence is Large ribosomal subunit protein bL34 (45 aa).

Belongs to the bacterial ribosomal protein bL34 family.

The sequence is that of Large ribosomal subunit protein bL34 from Frankia casuarinae (strain DSM 45818 / CECT 9043 / HFP020203 / CcI3).